A 365-amino-acid polypeptide reads, in one-letter code: Peptide chain release factor 2 (365 aa).

Gln-252 is subject to N5-methylglutamine.

It belongs to the prokaryotic/mitochondrial release factor family. Methylated by PrmC. Methylation increases the termination efficiency of RF2.

Its subcellular location is the cytoplasm. Functionally, peptide chain release factor 2 directs the termination of translation in response to the peptide chain termination codons UGA and UAA. The protein is Peptide chain release factor 2 of Aeromonas hydrophila subsp. hydrophila (strain ATCC 7966 / DSM 30187 / BCRC 13018 / CCUG 14551 / JCM 1027 / KCTC 2358 / NCIMB 9240 / NCTC 8049).